The following is a 61-amino-acid chain: Putative neurotoxin-D (61 aa).

Positions 1-19 are cleaved as a signal peptide; the sequence is MRTTVAILLVLFALSAILA. Intrachain disulfides connect Cys31–Cys51, Cys37–Cys56, and Cys39–Cys58.

Expressed by the venom gland.

It is found in the secreted. This chain is Putative neurotoxin-D, found in Lychas mucronatus (Chinese swimming scorpion).